The primary structure comprises 419 residues: Gamma-glutamyl phosphate reductase (419 aa).

This sequence belongs to the gamma-glutamyl phosphate reductase family.

The protein resides in the cytoplasm. The enzyme catalyses L-glutamate 5-semialdehyde + phosphate + NADP(+) = L-glutamyl 5-phosphate + NADPH + H(+). The protein operates within amino-acid biosynthesis; L-proline biosynthesis; L-glutamate 5-semialdehyde from L-glutamate: step 2/2. Its function is as follows. Catalyzes the NADPH-dependent reduction of L-glutamate 5-phosphate into L-glutamate 5-semialdehyde and phosphate. The product spontaneously undergoes cyclization to form 1-pyrroline-5-carboxylate. In Azoarcus sp. (strain BH72), this protein is Gamma-glutamyl phosphate reductase.